A 651-amino-acid chain; its full sequence is Ion-translocating oxidoreductase complex subunit C (651 aa).

2 consecutive 4Fe-4S ferredoxin-type domains span residues 368 to 398 (EYAE…QQLY) and 408 to 437 (KSEE…IQYF). Residues Cys378, Cys381, Cys384, Cys388, Cys417, Cys420, Cys423, and Cys427 each coordinate [4Fe-4S] cluster. 2 stretches are compositionally biased toward basic and acidic residues: residues 465–477 (QARM…ERKA) and 485–513 (ARRE…KANE). 2 disordered regions span residues 465–565 (QARM…QPTD) and 583–624 (LAQA…DPKK). Composition is skewed to polar residues over residues 554–564 (VENQEQQTQPT) and 587–600 (NSTS…QTAE). Positions 602 to 614 (EVEKTKSAVEKTQ) are enriched in basic and acidic residues.

Belongs to the 4Fe4S bacterial-type ferredoxin family. RnfC subfamily. In terms of assembly, the complex is composed of six subunits: RnfA, RnfB, RnfC, RnfD, RnfE and RnfG. Requires [4Fe-4S] cluster as cofactor.

It localises to the cell inner membrane. Its function is as follows. Part of a membrane-bound complex that couples electron transfer with translocation of ions across the membrane. The polypeptide is Ion-translocating oxidoreductase complex subunit C (Haemophilus influenzae (strain PittEE)).